The following is a 467-amino-acid chain: Glutamate--tRNA ligase (467 aa).

Positions 9–19 (PSPTGYLHIGG) match the 'HIGH' region motif. The 'KMSKS' region signature appears at 237 to 241 (KLSKR). K240 contributes to the ATP binding site.

This sequence belongs to the class-I aminoacyl-tRNA synthetase family. Glutamate--tRNA ligase type 1 subfamily. In terms of assembly, monomer.

The protein localises to the cytoplasm. The catalysed reaction is tRNA(Glu) + L-glutamate + ATP = L-glutamyl-tRNA(Glu) + AMP + diphosphate. In terms of biological role, catalyzes the attachment of glutamate to tRNA(Glu) in a two-step reaction: glutamate is first activated by ATP to form Glu-AMP and then transferred to the acceptor end of tRNA(Glu). This Xylella fastidiosa (strain M12) protein is Glutamate--tRNA ligase.